Consider the following 443-residue polypeptide: Chromosome partition protein MukF (443 aa).

The tract at residues 209 to 237 (LDETSGNLRELQDTLNAAGDKLQAQLLRI) is leucine-zipper.

It belongs to the MukF family. In terms of assembly, interacts, and probably forms a ternary complex, with MukE and MukB via its C-terminal region. The complex formation is stimulated by calcium or magnesium. It is required for an interaction between MukE and MukB.

Its subcellular location is the cytoplasm. The protein localises to the nucleoid. Its function is as follows. Involved in chromosome condensation, segregation and cell cycle progression. May participate in facilitating chromosome segregation by condensation DNA from both sides of a centrally located replisome during cell division. Not required for mini-F plasmid partitioning. Probably acts via its interaction with MukB and MukE. Overexpression results in anucleate cells. It has a calcium binding activity. This chain is Chromosome partition protein MukF, found in Actinobacillus pleuropneumoniae serotype 3 (strain JL03).